We begin with the raw amino-acid sequence, 1050 residues long: Transcription intermediary factor 1-alpha (1050 aa).

A Glycyl lysine isopeptide (Lys-Gly) (interchain with G-Cter in SUMO2) cross-link involves residue lysine 7. A compositionally biased stretch (low complexity) spans 15-30 (ASAAASGGPSAAPSGE). The interval 15 to 44 (ASAAASGGPSAAPSGENEAESRQGPDSERG) is disordered. Residues 33–44 (AESRQGPDSERG) show a composition bias toward basic and acidic residues. The RING-type zinc finger occupies 56–82 (CAVCHQNIQSRAPKLLPCLHSFCQRCL). Phosphothreonine is present on threonine 101. Serine 110 carries the phosphoserine modification. 2 B box-type zinc fingers span residues 158–211 (KSNQ…VSPE) and 218–259 (QRPV…YQFI). Residues cysteine 163, cysteine 166, cysteine 187, and histidine 200 each contribute to the Zn(2+) site. Lysine 205 is covalently cross-linked (Glycyl lysine isopeptide (Lys-Gly) (interchain with G-Cter in SUMO2)). Cysteine 223, histidine 226, cysteine 246, and histidine 251 together coordinate Zn(2+). Lysine 276 is covalently cross-linked (Glycyl lysine isopeptide (Lys-Gly) (interchain with G-Cter in SUMO2)). The stretch at 289-359 (NQIQNRIIEV…AGLSKQLEHV (71 aa)) forms a coiled coil. A disordered region spans residues 429–456 (ESQPQMPKQNPVVEQNSQPPSGLSSNQL). The segment covering 431-456 (QPQMPKQNPVVEQNSQPPSGLSSNQL) has biased composition (polar residues). Glycyl lysine isopeptide (Lys-Gly) (interchain with G-Cter in SUMO2) cross-links involve residues lysine 436 and lysine 458. Arginine 469 carries the omega-N-methylarginine modification. 2 stretches are compositionally biased toward low complexity: residues 476-490 (QVMA…RPAP) and 499-510 (QGPIQQPSISHQ). A disordered region spans residues 476–550 (QVMAQRQQVQ…PPNQNIPRQA (75 aa)). The span at 526–535 (PNGPVLPPHP) shows a compositional bias: pro residues. A Glycyl lysine isopeptide (Lys-Gly) (interchain with G-Cter in SUMO2) cross-link involves residue lysine 552. Residues 571–594 (ISSGQGTPSTTNSTSSTPSSPTIT) form a disordered region. Residues 577-594 (TPSTTNSTSSTPSSPTIT) show a composition bias toward low complexity. Lysine 641 participates in a covalent cross-link: Glycyl lysine isopeptide (Lys-Gly) (interchain with G-Cter in SUMO2). The interval 643-712 (TNIDHGQPRP…PAGADSTHKV (70 aa)) is disordered. Residues serine 654, serine 660, and serine 667 each carry the phosphoserine modification. Residues 654-666 (SNRTVQSPNSSVP) show a composition bias toward polar residues. A compositionally biased stretch (low complexity) spans 685–707 (SPSASSVGSRGSSGSSSKPAGAD). Residues lysine 702 and lysine 711 each participate in a glycyl lysine isopeptide (Lys-Gly) (interchain with G-Cter in SUMO2) cross-link. Lysine 723 participates in a covalent cross-link: Glycyl lysine isopeptide (Lys-Gly) (interchain with G-Cter in SUMO1); alternate. A Glycyl lysine isopeptide (Lys-Gly) (interchain with G-Cter in SUMO2); alternate cross-link involves residue lysine 723. Lysine 741 is covalently cross-linked (Glycyl lysine isopeptide (Lys-Gly) (interchain with G-Cter in SUMO2)). A Phosphoserine modification is found at serine 744. Residues 754 to 779 (NYPRSILTSLLLNSSQSSTSEETVLR) are nuclear receptor binding site (NRBS). Residues 766–824 (NSSQSSTSEETVLRSDAPDSTGDQPGLHQDNSSNGKSEWLDPSQKSPLHVGETRKEDDP) form a disordered region. Serine 768 carries the phosphoserine; by ATM modification. Lysine 801 is covalently cross-linked (Glycyl lysine isopeptide (Lys-Gly) (interchain with G-Cter in SUMO2)). Serine 808 is modified (phosphoserine). Lysine 810 participates in a covalent cross-link: Glycyl lysine isopeptide (Lys-Gly) (interchain with G-Cter in SUMO2). Serine 811 carries the post-translational modification Phosphoserine. A Phosphothreonine modification is found at threonine 818. The PHD-type zinc finger occupies 826 to 873 (EDWCAVCQNGGELLCCEKCPKVFHLSCHVPTLTNFPSGEWICTFCRDL). The segment at 834-840 (NGGELLC) is interaction with histone H3 that is not methylated at 'Lys-4' (H3K4me0). A Glycyl lysine isopeptide (Lys-Gly) (interchain with G-Cter in SUMO2) cross-link involves residue lysine 875. A Nuclear localization signal motif is present at residues 891 to 907 (KKKTEGLVKLTPIDKRK). In terms of domain architecture, Bromo spans 899-1004 (KLTPIDKRKC…NYFEELLKNL (106 aa)). A Glycyl lysine isopeptide (Lys-Gly) (interchain with G-Cter in SUMO2) cross-link involves residue lysine 949. Residues 979 to 980 (FN) are interaction with histone H3 that is acetylated at 'Lys-23' (H3K23ac). Lysine 992 participates in a covalent cross-link: Glycyl lysine isopeptide (Lys-Gly) (interchain with G-Cter in SUMO2). Basic and acidic residues predominate over residues 1011–1026 (PKPEFRNESEDNKFSD). The segment at 1011-1036 (PKPEFRNESEDNKFSDDSDDDFVQPR) is disordered. Phosphoserine is present on residues serine 1019, serine 1025, and serine 1028. A Glycyl lysine isopeptide (Lys-Gly) (interchain with G-Cter in SUMO2) cross-link involves residue lysine 1041. At serine 1042 the chain carries Phosphoserine.

As to quaternary structure, interacts with CARM1, NCOA2/GRIP1, PML, KAT5/TIP60, BRD7, CBX1, CBX3 and CBX5. Part of a coactivator complex containing TRIM24, NCOA2 and CARM1. Interacts with NR3C2/MCR. Interacts with the ligand-binding domain of estrogen receptors (in vitro). Interaction with DNA-bound estrogen receptors requires the presence of estradiol. Interacts with AR and p53/TP53. Interacts (via bromo domain) with histone H3 (via N-terminus), provided that it is not methylated at 'Lys-4' (H3K4me0). Does not interact with histone H3 that is methylated at 'Lys-4' (H3K4me1, H3K4me2 or H3K4me3). Interacts (via bromo domain) with histone H3 (via N-terminus) that is acetylated at 'Lys-23' (H3K23ac). Has the highest affinity for histone H3 that is both unmodified at 'Lys-4' (H3K4me0) and acetylated at 'Lys-23' (H3K23ac). Has very low affinity for histone H3 that is methylated at 'Lys-9' (H3K9me), or acetylated at both 'Lys-9' (H3K9ac) and 'Lys-14' (H3K14ac), or acetylated at 'Lys-27' (H3K27ac) (in vitro). Interacts with TRIM16. Post-translationally, phosphorylated at Ser-768 by ATM kinase induces ubiquitination and degradation during DNA damage. Sumoylated. In terms of processing, undergoes ubiquitination-mediated degradation in response to DNA damage.

It is found in the nucleus. It localises to the cytoplasm. Its subcellular location is the mitochondrion. The catalysed reaction is S-ubiquitinyl-[E2 ubiquitin-conjugating enzyme]-L-cysteine + [acceptor protein]-L-lysine = [E2 ubiquitin-conjugating enzyme]-L-cysteine + N(6)-ubiquitinyl-[acceptor protein]-L-lysine.. It functions in the pathway protein modification; protein ubiquitination. Transcriptional coactivator that interacts with numerous nuclear receptors and coactivators and modulates the transcription of target genes. Interacts with chromatin depending on histone H3 modifications, having the highest affinity for histone H3 that is both unmodified at 'Lys-4' (H3K4me0) and acetylated at 'Lys-23' (H3K23ac). Has E3 protein-ubiquitin ligase activity. During the DNA damage response, participates in an autoregulatory feedback loop with TP53. Early in response to DNA damage, ATM kinase phosphorylates TRIM24 leading to its ubiquitination and degradation. After sufficient DNA repair has occurred, TP53 activates TRIM24 transcription, ultimately leading to TRIM24-mediated TP53 ubiquitination and degradation. Plays a role in the regulation of cell proliferation and apoptosis, at least in part via its effects on p53/TP53 levels. Up-regulates ligand-dependent transcription activation by AR, GCR/NR3C1, thyroid hormone receptor (TR) and ESR1. Modulates transcription activation by retinoic acid (RA) receptors, including RARA. Plays a role in regulating retinoic acid-dependent proliferation of hepatocytes. Also participates in innate immunity by mediating the specific 'Lys-63'-linked ubiquitination of TRAF3 leading to activation of downstream signal transduction of the type I IFN pathway. Additionally, negatively regulates NLRP3/CASP1/IL-1beta-mediated pyroptosis and cell migration probably by ubiquitinating NLRP3. The sequence is that of Transcription intermediary factor 1-alpha (TRIM24) from Homo sapiens (Human).